The chain runs to 196 residues: RNA-binding protein with multiple splicing (196 aa).

Met1 is subject to N-acetylmethionine. Thr12 is subject to Phosphothreonine. Residues 24–101 (RTLFVSGLPL…QTLRLEFAKA (78 aa)) enclose the RRM domain. Positions 98-105 (FAKANTKM) are interaction with RNA. Phosphothreonine is present on Thr113.

As to quaternary structure, homodimer; each protein chain binds one RNA molecule via the external surface of the homodimer. Interacts with RNA binding proteins MBNL1, RBFOX2, RBM4 and RBM14; the interaction allows cooperative assembly of stable cell-specific alternative splicing regulatory complexes. Interacts with SMAD2, SMAD3 and SMAD4; the interactions are direct. In terms of tissue distribution, ubiquitously expressed, at various levels depending on the isoform and the tissue. Strongly expressed in the heart, prostate, small intestine, large intestine, and ovary; moderately expressed in the placenta, lung, liver, kidney, pancreas, and testis; and poorly expressed in the skeletal muscle, spleen, thymus and peripheral leukocytes.

Its subcellular location is the nucleus. It is found in the cytoplasm. The protein localises to the stress granule. The protein resides in the P-body. Functionally, RNA binding protein that mediates the regulation of pre-mRNA alternative splicing (AS). Acts either as activator (FLNB, HSPG2, LIPA1, MYOCD, PTPRF and PPFIBP1) or repressor (TPM1, ACTN1, ITGA7, PIEZO1, LSM14B, MBNL1 and MBML2) of splicing events on specific pre-mRNA targets. Together with RNA binding proteins RBFOX2 and MBNL1/2, activates a splicing program associated with differentiated contractile vascular smooth muscle cells (SMC) by regulating AS of numerous pre-mRNA involved in actin cytoskeleton and focal adhesion machineries, suggesting a role in promoting a cell differentiated state. Binds to introns, exons and 3'-UTR associated with tandem CAC trinucleotide motifs separated by a variable spacer region, at a minimum as a dimer. The minimal length of RNA required for RBPMS-binding tandem CAC motifs is 15 nt, with spacing ranging from 1 to 9 nt. Can also bind to CA dinucleotide repeats. Mediates repression of TPM1 exon 3 by binding to CAC tandem repeats in the flanking intronic regions, followed by higher-order oligomerization and heterotypic interactions with other splicing regulators including MBNL1 and RBFOX2, which prevents assembly of ATP-dependent splicing complexes. In terms of biological role, acts as a regulator of pre-mRNA alternative splicing (AS). Binds mRNA. Regulates AS of ACTN1, FLNB, although with lower efficiency than isoform A / RBPMSA. Acts as coactivator of SMAD transcriptional activity in a TGFB1-dependent manner, possibly through increased phosphorylation of SMAD2 and SMAD3 at the C-terminal SSXS regions and promotion of the nuclear accumulation of SMAD proteins. In Homo sapiens (Human), this protein is RNA-binding protein with multiple splicing.